A 179-amino-acid chain; its full sequence is Replication restart protein DnaT (179 aa).

The interval 156–179 is disordered; the sequence is GGLPKRDVNTVSEPDSQIPPGFRG.

The protein belongs to the DnaT family. As to quaternary structure, homooligomerizes. Interacts with PriB. Component of the replication restart primosome. Primosome assembly occurs via a 'hand-off' mechanism. PriA binds to replication forks, subsequently PriB then DnaT bind; DnaT then displaces ssDNA to generate the helicase loading substrate.

In terms of biological role, involved in the restart of stalled replication forks, which reloads the replicative helicase on sites other than the origin of replication. Can function in multiple replication restart pathways. Displaces ssDNA from a PriB-ssDNA complex. Probably forms a spiral filament on ssDNA. The polypeptide is Replication restart protein DnaT (Escherichia coli O17:K52:H18 (strain UMN026 / ExPEC)).